The primary structure comprises 472 residues: Glutamate--tRNA ligase 2 (472 aa).

The short motif at 10-20 (PSPTGYLHIGG) is the 'HIGH' region element. Cys-99, Cys-101, Cys-126, and Asp-128 together coordinate Zn(2+). Basic and acidic residues predominate over residues 112–130 (EQQARKEKPRYDGRCRDLD). The segment at 112–137 (EQQARKEKPRYDGRCRDLDGPPSEEV) is disordered. A 'KMSKS' region motif is present at residues 240-244 (RLSKR). Lys-243 contacts ATP.

This sequence belongs to the class-I aminoacyl-tRNA synthetase family. Glutamate--tRNA ligase type 1 subfamily. In terms of assembly, monomer. Requires Zn(2+) as cofactor.

It is found in the cytoplasm. The enzyme catalyses tRNA(Glu) + L-glutamate + ATP = L-glutamyl-tRNA(Glu) + AMP + diphosphate. Catalyzes the attachment of glutamate to tRNA(Glu) in a two-step reaction: glutamate is first activated by ATP to form Glu-AMP and then transferred to the acceptor end of tRNA(Glu). This chain is Glutamate--tRNA ligase 2, found in Halorhodospira halophila (strain DSM 244 / SL1) (Ectothiorhodospira halophila (strain DSM 244 / SL1)).